Here is a 428-residue protein sequence, read N- to C-terminus: Keratin, type I cytoskeletal 18-A (428 aa).

A head region spans residues 2 to 78 (SSSRSVYSSS…NVNLFGGVQN (77 aa)). Positions 24–45 (SAPRFTPGSSAASVHAGAGGSG) are disordered. Residues 79–114 (EKETMQDLNDRLASYLERVRSLESANKKLEVQIRQH) are coil 1A. One can recognise an IF rod domain in the interval 79–389 (EKETMQDLND…RLLEGDSFDL (311 aa)). The interval 115 to 130 (TEKKGPAKDWSPYYMT) is linker 1. The interval 131–222 (IEDLKKQVFN…KNHQDDVNEL (92 aa)) is coil 1B. Positions 223–246 (QAQIASSAVTVEVDAPKSQDLGKI) are linker 12. The tract at residues 247 to 384 (MADLRAQYDE…IQTYRRLLEG (138 aa)) is coil 2. The tract at residues 385 to 428 (DSFDLQDAVPVVTTQTVKKVITTTQRLVDGKVVAESNNTEVIKS) is tail.

It belongs to the intermediate filament family. In terms of assembly, heterotetramer of two type I and two type II keratins. Keratin-18 associates with keratin-8. In terms of processing, proteolytically cleaved by caspases during epithelial cell apoptosis. Expressed at high levels in notochord and low levels in adult liver.

When phosphorylated, plays a role in filament reorganization. In Xenopus laevis (African clawed frog), this protein is Keratin, type I cytoskeletal 18-A (krt18-a).